Here is a 354-residue protein sequence, read N- to C-terminus: 3-isopropylmalate dehydrogenase (354 aa).

An NAD(+)-binding site is contributed by 73–86 (GPAYDKLDRPLRPE). Residues Arg-93, Arg-103, Arg-131, and Asp-221 each contribute to the substrate site. Residues Asp-221, Asp-245, and Asp-249 each coordinate Mg(2+). Position 279-291 (279-291 (GSAPDIAGQNLAN)) interacts with NAD(+).

It belongs to the isocitrate and isopropylmalate dehydrogenases family. LeuB type 1 subfamily. In terms of assembly, homodimer. Requires Mg(2+) as cofactor. Mn(2+) serves as cofactor.

It is found in the cytoplasm. It catalyses the reaction (2R,3S)-3-isopropylmalate + NAD(+) = 4-methyl-2-oxopentanoate + CO2 + NADH. The protein operates within amino-acid biosynthesis; L-leucine biosynthesis; L-leucine from 3-methyl-2-oxobutanoate: step 3/4. Catalyzes the oxidation of 3-carboxy-2-hydroxy-4-methylpentanoate (3-isopropylmalate) to 3-carboxy-4-methyl-2-oxopentanoate. The product decarboxylates to 4-methyl-2 oxopentanoate. In Chromobacterium violaceum (strain ATCC 12472 / DSM 30191 / JCM 1249 / CCUG 213 / NBRC 12614 / NCIMB 9131 / NCTC 9757 / MK), this protein is 3-isopropylmalate dehydrogenase.